The chain runs to 498 residues: Glycerol kinase (498 aa).

Position 11 (Thr11) interacts with ADP. ATP-binding residues include Thr11, Ser12, and Ser13. Thr11 contributes to the sn-glycerol 3-phosphate binding site. Arg15 lines the ADP pocket. Positions 81, 82, 133, and 242 each coordinate sn-glycerol 3-phosphate. Arg81, Glu82, Tyr133, Asp242, and Gln243 together coordinate glycerol. Residues Thr264 and Gly307 each contribute to the ADP site. Residues Thr264, Gly307, Gln311, and Gly412 each coordinate ATP. ADP is bound by residues Gly412 and Asn416.

This sequence belongs to the FGGY kinase family.

The enzyme catalyses glycerol + ATP = sn-glycerol 3-phosphate + ADP + H(+). The protein operates within polyol metabolism; glycerol degradation via glycerol kinase pathway; sn-glycerol 3-phosphate from glycerol: step 1/1. Its activity is regulated as follows. Inhibited by fructose 1,6-bisphosphate (FBP). In terms of biological role, key enzyme in the regulation of glycerol uptake and metabolism. Catalyzes the phosphorylation of glycerol to yield sn-glycerol 3-phosphate. This chain is Glycerol kinase, found in Delftia acidovorans (strain DSM 14801 / SPH-1).